Consider the following 699-residue polypeptide: tRNA(Met) cytidine acetyltransferase TmcA (699 aa).

ATP contacts are provided by residues glutamine 178, 200 to 209 (GRGKSTLAGM), and arginine 322. An N-acetyltransferase domain is found at 408-547 (MHIASAQVAG…SGCYSAMAIL (140 aa)). Acetyl-CoA-binding positions include 475–477 (IAV) and 482–488 (RRQGIGR).

This sequence belongs to the RNA cytidine acetyltransferase family. TmcA subfamily.

Its subcellular location is the cytoplasm. It catalyses the reaction cytidine(34) in elongator tRNA(Met) + acetyl-CoA + ATP + H2O = N(4)-acetylcytidine(34) in elongator tRNA(Met) + ADP + phosphate + CoA + H(+). Catalyzes the formation of N(4)-acetylcytidine (ac(4)C) at the wobble position of tRNA(Met), by using acetyl-CoA as an acetyl donor and ATP (or GTP). This chain is tRNA(Met) cytidine acetyltransferase TmcA, found in Pectobacterium atrosepticum (strain SCRI 1043 / ATCC BAA-672) (Erwinia carotovora subsp. atroseptica).